A 184-amino-acid polypeptide reads, in one-letter code: Large ribosomal subunit protein uL22 (184 aa).

The tract at residues 160 to 184 (PEEEVAQKKKISQKKLKKQKLMARE) is disordered. Residues 167-184 (KKKISQKKLKKQKLMARE) are compositionally biased toward basic residues.

It belongs to the universal ribosomal protein uL22 family. Component of the large ribosomal subunit.

The protein localises to the cytoplasm. Its function is as follows. Component of the large ribosomal subunit. The ribosome is a large ribonucleoprotein complex responsible for the synthesis of proteins in the cell. The protein is Large ribosomal subunit protein uL22 (RPL17) of Bos taurus (Bovine).